A 152-amino-acid polypeptide reads, in one-letter code: MTHIIIDGDACPVVDSIIDLTTETGIFVTIIRSFSHFSNQLYPPHVSTLYVDDGPDAVDYKIVQLSTKDDIVVTQDYGLASLLVDKVLIVMHHNGKIYNSKNIQQLLDKRYINAQIRKQGGRHKGPPPFTKQDQKVFEQSLLKVIHRIKELD.

It belongs to the UPF0178 family.

The protein is UPF0178 protein SaurJH9_0705 of Staphylococcus aureus (strain JH9).